Reading from the N-terminus, the 152-residue chain is Ribosomal RNA large subunit methyltransferase H (152 aa).

S-adenosyl-L-methionine-binding positions include leucine 69, glycine 96, and 118–123 (FGKLTF).

The protein belongs to the RNA methyltransferase RlmH family. As to quaternary structure, homodimer.

Its subcellular location is the cytoplasm. It carries out the reaction pseudouridine(1915) in 23S rRNA + S-adenosyl-L-methionine = N(3)-methylpseudouridine(1915) in 23S rRNA + S-adenosyl-L-homocysteine + H(+). In terms of biological role, specifically methylates the pseudouridine at position 1915 (m3Psi1915) in 23S rRNA. In Mesomycoplasma hyopneumoniae (strain 7448) (Mycoplasma hyopneumoniae), this protein is Ribosomal RNA large subunit methyltransferase H.